The chain runs to 256 residues: Pimeloyl-[acyl-carrier protein] methyl ester esterase (256 aa).

An AB hydrolase-1 domain is found at 16-240 (LVILHGWGVN…PKASHAPFLS (225 aa)). Substrate-binding positions include Trp-22, 80–81 (SL), and 143–147 (FLAIQ). The active-site Nucleophile is Ser-80. Catalysis depends on residues Asp-207 and His-235. His-235 is a substrate binding site.

It belongs to the AB hydrolase superfamily. Carboxylesterase BioH family. In terms of assembly, monomer.

It is found in the cytoplasm. The enzyme catalyses 6-carboxyhexanoyl-[ACP] methyl ester + H2O = 6-carboxyhexanoyl-[ACP] + methanol + H(+). Its pathway is cofactor biosynthesis; biotin biosynthesis. Its function is as follows. The physiological role of BioH is to remove the methyl group introduced by BioC when the pimeloyl moiety is complete. It allows to synthesize pimeloyl-ACP via the fatty acid synthetic pathway through the hydrolysis of the ester bonds of pimeloyl-ACP esters. The polypeptide is Pimeloyl-[acyl-carrier protein] methyl ester esterase (Shewanella woodyi (strain ATCC 51908 / MS32)).